A 425-amino-acid chain; its full sequence is MHDIKLIRDNPDAFDAGLAMRGLPAQSATLIELDASRREALGKQQDAETERNALSKQIGKAKASGDEAEFNRLRSEVDRLKAVLEESGQQARHFDEVLNQHLAALPNLPHADVPQGADEADNVEERRWGEPRTMAFTPRDHVDLGESLGQMDFKKAAEISGSRFVALRGGLARLERALAQFMLDLHTTEHGYEEVSPPYMVRDEAVFGTGQLPKFAEDLFRTTDDHWLIPTAEVPLTNLARETIHAEADLPMRMTAYTPCFRSEAGSAGRDTRGMIRLHQFQKVEMVSIVTPDESDAELERMTGCAEKVLQLLELPYRVMKLCTGDMGFAARRTYDLEVWMPSQDCYREISSCSTCGDFQARRMDARFRKEGEKRPAFLHTLNGSGVAVGRALVAVLENHQNEDGSITIPAALRPYMGGVERIEG.

L-serine is bound at residue 231–233 (TAE). 262–264 (RSE) lines the ATP pocket. An L-serine-binding site is contributed by Glu-285. 349–352 (EISS) contributes to the ATP binding site. Ser-385 contacts L-serine.

The protein belongs to the class-II aminoacyl-tRNA synthetase family. Type-1 seryl-tRNA synthetase subfamily. In terms of assembly, homodimer. The tRNA molecule binds across the dimer.

The protein localises to the cytoplasm. The enzyme catalyses tRNA(Ser) + L-serine + ATP = L-seryl-tRNA(Ser) + AMP + diphosphate + H(+). It catalyses the reaction tRNA(Sec) + L-serine + ATP = L-seryl-tRNA(Sec) + AMP + diphosphate + H(+). It participates in aminoacyl-tRNA biosynthesis; selenocysteinyl-tRNA(Sec) biosynthesis; L-seryl-tRNA(Sec) from L-serine and tRNA(Sec): step 1/1. Catalyzes the attachment of serine to tRNA(Ser). Is also able to aminoacylate tRNA(Sec) with serine, to form the misacylated tRNA L-seryl-tRNA(Sec), which will be further converted into selenocysteinyl-tRNA(Sec). This is Serine--tRNA ligase from Maricaulis maris (strain MCS10) (Caulobacter maris).